The primary structure comprises 235 residues: Caveolin-1 (235 aa).

Over 1 to 161 the chain is Cytoplasmic; it reads MSTEQDIKTE…LVSLLALPFT (161 aa). A disordered region spans residues 29 to 72; sequence GEAVVAPEEPKPKKNWFTFGKKKAAPTDETNIEEGGAPGDEPVK. Residues 162 to 182 constitute an intramembrane region (helical); that stretch reads IIFAIFFGLLASINVFIIVPL. Topologically, residues 183–235 are cytoplasmic; it reads GKLLSIPGTLLAKLWNWLIHAIFDPIASAVGLIFSNFNIRKYGINQETTAPCV. C234 carries S-palmitoyl cysteine lipidation.

The protein belongs to the caveolin family. As to quaternary structure, homooligomer containing 14-16 monomers per oligomer.

It is found in the golgi apparatus membrane. The protein localises to the cell membrane. Its subcellular location is the membrane. The protein resides in the caveola. Its function is as follows. May act as a scaffolding protein within caveolar membranes. Interacts directly with G-protein alpha subunits and can functionally regulate their activity. This is Caveolin-1 (cav-1) from Caenorhabditis elegans.